The sequence spans 398 residues: Homocysteine-responsive endoplasmic reticulum-resident ubiquitin-like domain member 2 protein (398 aa).

A Ubiquitin-like domain is found at 11–90 (VTLVIKAPNQ…HMVHLVCASR (80 aa)). 2 disordered regions span residues 90 to 143 (RTPP…SIRH) and 212 to 247 (NQST…NVAP). Residues 96-125 (PKASKSSKSMGTSSSGRSSSSGSANPGSTS) are compositionally biased toward low complexity. Residues 233-245 (NPPPNPPRAPPNV) show a composition bias toward pro residues. The chain crosses the membrane as a helical span at residues 298 to 318 (FVMVMGALILVYMHQAGWFPL).

It is found in the membrane. Functionally, could be involved in the unfolded protein response (UPR) pathway. This chain is Homocysteine-responsive endoplasmic reticulum-resident ubiquitin-like domain member 2 protein (herpud2), found in Xenopus laevis (African clawed frog).